The sequence spans 1264 residues: Multifunctional 2-oxoglutarate metabolism enzyme (1264 aa).

The 2-oxoglutarate dehydrogenase E1, N-terminal part stretch occupies residues 1–41 (MSSSPSPFGQNEWLVEEMYRKFREDPSSVDPSWHEFLVDYN). Residues 23–37 (REDPSSVDPSWHEFL) show a composition bias toward basic and acidic residues. The interval 23–140 (REDPSSVDPS…AQPADDSDQN (118 aa)) is disordered. Positions 42–102 (PEPTTDSSAS…SKPQAKAKPA (61 aa)) are linker. Positions 43 to 59 (EPTTDSSASENGQQTRT) are enriched in polar residues. Positions 63-73 (KAPPEPAPAPA) are enriched in pro residues. The tract at residues 103–373 (ESKSSTKPAD…LRTVHQLLLS (271 aa)) is succinyltransferase E2. The active-site Proton acceptor; for succinyltransferase activity is His-352. Residues 374-1264 (DDFFDEIFRE…QEILDEAFAP (891 aa)) form a 2-oxoglutarate dehydrogenase E1, C-terminal part region. Arg-578 lines the thiamine diphosphate pocket. 2-oxoglutarate contacts are provided by His-617 and Ser-642. The thiamine diphosphate site is built by Ser-642, Leu-644, Asp-681, Ala-682, Ala-683, and Asn-714. Asp-681 provides a ligand contact to Mg(2+). Mg(2+) is bound by residues Asn-714 and Ile-716. Residues 819-850 (DISMKEAEDALRDYQGQLEQVFNEVRELEKHE) are a coiled coil. Position 1056 (His-1056) interacts with 2-oxoglutarate. Acetyl-CoA contacts are provided by Thr-1074, Arg-1090, Lys-1125, Ser-1128, Gln-1178, Arg-1185, and Arg-1186.

The protein belongs to the 2-oxoacid dehydrogenase family. Kgd subfamily. In terms of assembly, homodimer. The 2-oxoglutarate dehydrogenase (ODH) complex contains multiple copies of three enzymatic components: 2-oxoglutarate dehydrogenase (E1), dihydrolipoamide succinyltransferase (E2) and lipoamide dehydrogenase (E3). The cofactor is Mg(2+). Thiamine diphosphate is required as a cofactor.

The enzyme catalyses glyoxylate + 2-oxoglutarate + H(+) = 2-hydroxy-3-oxoadipate + CO2. It catalyses the reaction 2-oxoglutarate + H(+) = succinate semialdehyde + CO2. It carries out the reaction N(6)-[(R)-lipoyl]-L-lysyl-[protein] + 2-oxoglutarate + H(+) = N(6)-[(R)-S(8)-succinyldihydrolipoyl]-L-lysyl-[protein] + CO2. The catalysed reaction is N(6)-[(R)-dihydrolipoyl]-L-lysyl-[protein] + succinyl-CoA = N(6)-[(R)-S(8)-succinyldihydrolipoyl]-L-lysyl-[protein] + CoA. It participates in carbohydrate metabolism; tricarboxylic acid cycle; succinate from 2-oxoglutarate (transferase route): step 1/2. The protein operates within carbohydrate metabolism; tricarboxylic acid cycle; succinyl-CoA from 2-oxoglutarate (dehydrogenase route): step 1/1. Alpha-ketoglutarate dehydrogenase and decarboxylase activities are inhibited by unphosphorylated GarA, and allosterically activated by acetyl-CoA, the main substrate of the TCA cycle. Its function is as follows. Shows three enzymatic activities that share a first common step, the attack of thiamine-PP on 2-oxoglutarate (alpha-ketoglutarate, KG), leading to the formation of an enamine-thiamine-PP intermediate upon decarboxylation. Thus, displays KGD activity, catalyzing the decarboxylation from five-carbon 2-oxoglutarate to four-carbon succinate semialdehyde (SSA). Also catalyzes C-C bond formation between the activated aldehyde formed after decarboxylation of alpha-ketoglutarate and the carbonyl of glyoxylate (GLX), to yield 2-hydroxy-3-oxoadipate (HOA), which spontaneously decarboxylates to form 5-hydroxylevulinate (HLA). And is also a component of the 2-oxoglutarate dehydrogenase (ODH) complex, that catalyzes the overall conversion of 2-oxoglutarate to succinyl-CoA and CO(2). The KG decarboxylase and KG dehydrogenase reactions provide two alternative, tightly regulated, pathways connecting the oxidative and reductive branches of the TCA cycle. This is Multifunctional 2-oxoglutarate metabolism enzyme (kgd) from Mycobacterium sp. (strain JLS).